The primary structure comprises 351 residues: SH3 domain-containing protein 3 (351 aa).

Coiled coils occupy residues 1-21 (MDAFRRQASKLRDQVAKQQLA) and 193-213 (LQLAEAKMQELKANMAVLGKE). Residues 31–267 (YESSDVMVID…MVTEKQHKES (237 aa)) enclose the BAR domain. Residues 281–340 (TSYFLAEVIHPFSAASEKELDLDKGDYIVVRKVSQTGWAEGECKGKAGWFPMAYIEKRQR) enclose the SH3 domain.

In terms of assembly, interacts with FREE1. Interacts (via SH3 domain) with DRP2A/ADL6. Binds to SH3P2. In terms of tissue distribution, detected in all tissues except seedlings.

It localises to the cytoplasmic vesicle. The protein resides in the clathrin-coated vesicle. May be involved in the recruitment of DRP2A to the accessory protein complex and in the negative regulation of its GTPase activity. The chain is SH3 domain-containing protein 3 from Arabidopsis thaliana (Mouse-ear cress).